A 637-amino-acid chain; its full sequence is Keratin, type II cytoskeletal 1 (637 aa).

Residues 1–187 (MSLQCSSRSL…DPQIQKVKSQ (187 aa)) form a head region. At arginine 12 the chain carries Omega-N-methylarginine. Residues serine 21 and serine 24 each carry the phosphoserine modification. The residue at position 49 (arginine 49) is an Omega-N-methylarginine. Serine 67 carries the phosphoserine modification. A coiled-coil region spans residues 180–328 (QIQKVKSQER…DIDFFSALYQ (149 aa)). The segment at 188–223 (EREQIKSLNDKFASFIDKVRFLEQQNQVLQTKWELL) is coil 1A. Residues 188 to 501 (EREQIKSLND…KLLEGEEIRM (314 aa)) form the IF rod domain. The interval 224–243 (QQVDTTTRTQNLDPFFENYI) is linker 1. A coil 1B region spans residues 244 to 334 (SILRRKVDSL…ALYQMEMSQM (91 aa)). Lysine 284 bears the N6,N6-dimethyllysine mark. Positions 335-358 (QTQISETNVVLSMDNNRSLDLDGI) are linker 12. The residue at position 352 (serine 352) is a Phosphoserine. The tract at residues 359–497 (ISEVKAQYDS…ATYKKLLEGE (139 aa)) is coil 2. A coiled-coil region spans residues 397–483 (DSVRNTKMEI…QELMNTKLAL (87 aa)). A tail region spans residues 498–637 (EIRMSGECTP…VSTSYSRGTK (140 aa)). Disordered stretches follow at residues 505–533 (CTPNVSVSVSTSHTSMSGSSSRGGGSGGG) and 563–637 (YGGG…RGTK). Residues 509–524 (VSVSVSTSHTSMSGSS) are compositionally biased toward low complexity. Omega-N-methylarginine occurs at positions 526, 585, and 607. A compositionally biased stretch (gly residues) spans 563–618 (YGGGSGGGSYGGGSGGGSSGSHRGGSGGGGGSSGGSYGGSSGGGRGGSSSGGGGVK). Residues 624–637 (TVKFVSTSYSRGTK) show a composition bias toward polar residues.

This sequence belongs to the intermediate filament family. Heterotetramer of two type I and two type II keratins. Heterodimer with KRT10. Two heterodimers of KRT1 and KRT10 form a heterotetramer. Forms a heterodimer with KRT14; the interaction is more abundant in the absence of KRT5. Interacts with PLEC isoform 1C, when in a heterodimer with KRT10. Interacts with ITGB1 in the presence of RACK1 and SRC, and with RACK1. Interacts with C1QBP; the association represents a cell surface kininogen receptor. Interacts with EPPK1; interaction is dependent of higher-order structure of intermediate filament. Post-translationally, undergoes deimination of some arginine residues (citrullination). Expressed in the infundibular regions of the ear, the interfollicular epidermis of the back, in the interscale regions containing hair follicles in the tail, and in the soles of the footpads (at protein level).

It is found in the cell membrane. The protein localises to the cytoplasm. May regulate the activity of kinases such as PKC and SRC via binding to integrin beta-1 (ITB1) and the receptor of activated protein C kinase 1 (RACK1). In complex with C1QBP is a high affinity receptor for kininogen-1/HMWK. In Mus musculus (Mouse), this protein is Keratin, type II cytoskeletal 1 (Krt1).